A 92-amino-acid chain; its full sequence is Elongation factor 1-beta (92 aa).

It belongs to the EF-1-beta/EF-1-delta family.

In terms of biological role, promotes the exchange of GDP for GTP in EF-1-alpha/GDP, thus allowing the regeneration of EF-1-alpha/GTP that could then be used to form the ternary complex EF-1-alpha/GTP/AAtRNA. The sequence is that of Elongation factor 1-beta from Pyrobaculum calidifontis (strain DSM 21063 / JCM 11548 / VA1).